Reading from the N-terminus, the 161-residue chain is Allophycocyanin beta chain (161 aa).

N71 carries the N4-methylasparagine modification. C81 is a binding site for (2R,3E)-phycocyanobilin.

The protein belongs to the phycobiliprotein family. Heterodimer of an alpha and a beta chain. Contains one covalently linked phycocyanobilin chromophore.

The protein resides in the cellular thylakoid membrane. Functionally, light-harvesting photosynthetic bile pigment-protein from the phycobiliprotein complex. Allophycocyanin has a maximum absorption at approximately 650 nanometers. The protein is Allophycocyanin beta chain (apcB) of Synechococcus sp. (strain ATCC 27144 / PCC 6301 / SAUG 1402/1) (Anacystis nidulans).